The primary structure comprises 513 residues: DNA damage-binding protein CMR1 (513 aa).

The span at 35–45 (RSEAGIEDHRK) shows a compositional bias: basic and acidic residues. Positions 35–103 (RSEAGIEDHR…TAQNVKQEEE (69 aa)) are disordered. WD repeat units follow at residues 183 to 224 (IVHE…PDPE), 237 to 277 (LFSR…SDEL), 329 to 369 (LSDK…AKPD), 386 to 425 (NSRL…PSEL), 438 to 477 (GRWV…LSHL), and 478 to 513 (ETST…APQE).

This sequence belongs to the WD repeat DDB2/WDR76 family.

Functionally, DNA-binding protein that binds to both single- and double-stranded DNA. Binds preferentially to UV-damaged DNA. May be involved in DNA-metabolic processes. This Eremothecium gossypii (strain ATCC 10895 / CBS 109.51 / FGSC 9923 / NRRL Y-1056) (Yeast) protein is DNA damage-binding protein CMR1.